A 145-amino-acid chain; its full sequence is Trafficking protein particle complex subunit 1 (145 aa).

Belongs to the TRAPP small subunits family. BET5 subfamily. As to quaternary structure, part of the multisubunit transport protein particle (TRAPP) complex. The heterodimer TRAPPC6B-TRAPPC3 interacts with TRAPPC1 likely providing a core for TRAPP complex formation.

It localises to the golgi apparatus. The protein resides in the cis-Golgi network. The protein localises to the endoplasmic reticulum. Its function is as follows. May play a role in vesicular transport from endoplasmic reticulum to Golgi. The polypeptide is Trafficking protein particle complex subunit 1 (Mus musculus (Mouse)).